Here is a 207-residue protein sequence, read N- to C-terminus: Guanylate kinase (207 aa).

In terms of domain architecture, Guanylate kinase-like spans 6–185 (GLLIVLSGPS…AKNRIQSIVE (180 aa)). 13 to 20 (GPSGVGKG) is an ATP binding site.

This sequence belongs to the guanylate kinase family.

The protein localises to the cytoplasm. The catalysed reaction is GMP + ATP = GDP + ADP. In terms of biological role, essential for recycling GMP and indirectly, cGMP. The protein is Guanylate kinase of Staphylococcus epidermidis (strain ATCC 12228 / FDA PCI 1200).